Reading from the N-terminus, the 155-residue chain is Gene 5 protein (155 aa).

The interval methionine 1–threonine 24 is disordered. Basic and acidic residues predominate over residues glycine 8 to threonine 19.

The chain is Gene 5 protein (5) from Mycobacterium (Mycobacteriophage D29).